An 87-amino-acid polypeptide reads, in one-letter code: UPF0248 protein TON_0940 (87 aa).

This sequence belongs to the UPF0248 family.

The polypeptide is UPF0248 protein TON_0940 (Thermococcus onnurineus (strain NA1)).